The chain runs to 429 residues: Enolase (429 aa).

Q163 is a binding site for (2R)-2-phosphoglycerate. E205 functions as the Proton donor in the catalytic mechanism. Positions 242, 286, and 313 each coordinate Mg(2+). Residues K338, R367, S368, and K389 each contribute to the (2R)-2-phosphoglycerate site. K338 acts as the Proton acceptor in catalysis.

The protein belongs to the enolase family. Mg(2+) serves as cofactor.

Its subcellular location is the cytoplasm. It localises to the secreted. The protein localises to the cell surface. It carries out the reaction (2R)-2-phosphoglycerate = phosphoenolpyruvate + H2O. It participates in carbohydrate degradation; glycolysis; pyruvate from D-glyceraldehyde 3-phosphate: step 4/5. Functionally, catalyzes the reversible conversion of 2-phosphoglycerate (2-PG) into phosphoenolpyruvate (PEP). It is essential for the degradation of carbohydrates via glycolysis. The sequence is that of Enolase from Geotalea uraniireducens (strain Rf4) (Geobacter uraniireducens).